A 324-amino-acid polypeptide reads, in one-letter code: Beta-ketoacyl-[acyl-carrier-protein] synthase III (324 aa).

Residues Cys112 and His249 contribute to the active site. The segment at 250-254 (QANRR) is ACP-binding. The active site involves Asn279.

It belongs to the thiolase-like superfamily. FabH family. As to quaternary structure, homodimer.

Its subcellular location is the cytoplasm. The enzyme catalyses malonyl-[ACP] + acetyl-CoA + H(+) = 3-oxobutanoyl-[ACP] + CO2 + CoA. The protein operates within lipid metabolism; fatty acid biosynthesis. In terms of biological role, catalyzes the condensation reaction of fatty acid synthesis by the addition to an acyl acceptor of two carbons from malonyl-ACP. Catalyzes the first condensation reaction which initiates fatty acid synthesis and may therefore play a role in governing the total rate of fatty acid production. Possesses both acetoacetyl-ACP synthase and acetyl transacylase activities. Its substrate specificity determines the biosynthesis of branched-chain and/or straight-chain of fatty acids. The protein is Beta-ketoacyl-[acyl-carrier-protein] synthase III of Streptococcus pyogenes serotype M49 (strain NZ131).